We begin with the raw amino-acid sequence, 429 residues long: Saccharopine dehydrogenase-like oxidoreductase (429 aa).

At alanine 2 the chain carries N-acetylalanine. Serine 217 is subject to Phosphoserine.

Belongs to the saccharopine dehydrogenase family.

This is Saccharopine dehydrogenase-like oxidoreductase (SCCPDH) from Bos taurus (Bovine).